The primary structure comprises 199 residues: MQYPLPIARLIDNYMKLPGIGEKTATRLAFYTMDMPEQDVEDFSKSLMQVKENLHSCSICGNITESDPCEICRDSNRDRSTIMVVEQPKDVMAFEEMGEYNGLYHVLHGVLSPMDGVGPEEINIKSLITRLQKQDEVKEVILALNSSPEGEATAMYLAKLIKPAGLKVTRLAAGLAVGSDIEYANSITLKRAVQGRTDL.

The segment at 57–72 (CSICGNITESDPCEIC) adopts a C4-type zinc-finger fold. The Toprim domain occupies 80 to 176 (STIMVVEQPK…KVTRLAAGLA (97 aa)).

This sequence belongs to the RecR family.

In terms of biological role, may play a role in DNA repair. It seems to be involved in an RecBC-independent recombinational process of DNA repair. It may act with RecF and RecO. The sequence is that of Recombination protein RecR from Lactobacillus johnsonii (strain CNCM I-12250 / La1 / NCC 533).